Consider the following 223-residue polypeptide: MSQSTASLVPEGNQGSLQEDVSFDFNGVPGQALDAVRMRLAQLTHSLRRIRDEMSKAELPQWYTLQSQLNVTLSQLVSVTSTLQHFQETLDSTVVYPLPKFPTTSHESLVTTLLRKKNIPEVDEWMKYVRETSGVTTALLKDEEIEKLLQQDREITNWARTTFRNEYGKHDFKNEESLSEEHASLLVRDSKPSKPFNVDDVLKFTFTGEKPIITGSTSTSSSN.

The interval 2 to 138 is interaction with TBP1; the sequence is SQSTASLVPE…VRETSGVTTA (137 aa). Positions 33 to 59 form a coiled coil; it reads LDAVRMRLAQLTHSLRRIRDEMSKAEL.

This sequence belongs to the Mediator complex subunit 8 family. As to quaternary structure, component of the Mediator complex, which is composed of at least 21 subunits that form three structurally distinct submodules. The Mediator head module contains MED6, MED8, MED11, SRB4/MED17, SRB5/MED18, ROX3/MED19, SRB2/MED20 and SRB6/MED22, the middle module contains MED1, MED4, NUT1/MED5, MED7, CSE2/MED9, NUT2/MED10, SRB7/MED21 and SOH1/MED31, and the tail module contains MED2, PGD1/MED3, RGR1/MED14, GAL11/MED15 and SIN4/MED16. The head and the middle modules interact directly with RNA polymerase II, whereas the elongated tail module interacts with gene-specific regulatory proteins. MED8 interacts directly with SRB5/MED18. Also interacts with Hexokinase B (HXK2). Interacts with TBP1.

Its subcellular location is the nucleus. Functionally, component of the Mediator complex, a coactivator involved in the regulated transcription of nearly all RNA polymerase II-dependent genes. Mediator functions as a bridge to convey information from gene-specific regulatory proteins to the basal RNA polymerase II transcription machinery. The Mediator complex, having a compact conformation in its free form, is recruited to promoters by direct interactions with regulatory proteins and serves for the assembly of a functional preinitiation complex with RNA polymerase II and the general transcription factors. The Mediator complex unfolds to an extended conformation and partially surrounds RNA polymerase II, specifically interacting with the unphosphorylated form of the C-terminal domain (CTD) of RNA polymerase II. The Mediator complex dissociates from the RNA polymerase II holoenzyme and stays at the promoter when transcriptional elongation begins. MED8 binds to the consensus sequence 5'-[AC][AG]GAAAT-3' in both the UAS of SUC2 and the DRS2 of HXK2. This Saccharomyces cerevisiae (strain ATCC 204508 / S288c) (Baker's yeast) protein is Mediator of RNA polymerase II transcription subunit 8 (MED8).